A 725-amino-acid polypeptide reads, in one-letter code: IML2-like protein SCY_3392 (725 aa).

A Phosphothreonine modification is found at T196. Phosphoserine occurs at positions 246, 377, and 380.

It belongs to the IML2 family.

Its subcellular location is the cytoplasm. It localises to the nucleus. Its function is as follows. May be involved in mitochondrial DNA stability. The protein is IML2-like protein SCY_3392 of Saccharomyces cerevisiae (strain YJM789) (Baker's yeast).